A 459-amino-acid polypeptide reads, in one-letter code: MSNFAIXLAAGKGTRMKSDLPKVLHKVAGIPMLEYVXRSVGAIXPXKTVTVVGHKAELVEEVLTGQTEFVTQSEQLGTGHAVMMTEPILEGLSGHTLVIAGDTPLITGESLKNLIDFHINHKNVATILTAETDNPFGYGRIVRNDNAEXLRIVEQKDATDFEKQIKEINTGTYVFDNERLFEALKNINTNNAQGEYYITDVIGIFRETGEKVGAYTLKDFDESLGVNDRVALATAESVMRRRINHKHMVNGVSFVNPEATYIDIDVEIAPEVQIEANVTLKGQTKIGAETVLTNGTYVVDSTIGAGAVITNSMIEESSVADGVTVGPYAHIRPNSSLGAQVHIGNFVEVKGSSIGENTKAGHLTYIGNCEVGSNVNFGAGTITVNYDGKNKYKTVIGDNVFVGSNSTIIAPVXLGDNSLVGAGSTITKDVPADAIAIGRGRQINKDEYATRLPHHPKNQ.

A pyrophosphorylase region spans residues 1–229 (MSNFAIXLAA…FDESLGVNDR (229 aa)). Residues 8 to 11 (LAAG), Lys22, Gln72, and 77 to 78 (GT) each bind UDP-N-acetyl-alpha-D-glucosamine. A Mg(2+)-binding site is contributed by Asp102. Gly139, Glu154, Asn169, and Asn227 together coordinate UDP-N-acetyl-alpha-D-glucosamine. Position 227 (Asn227) interacts with Mg(2+). The tract at residues 230 to 250 (VALATAESVMRRRINHKHMVN) is linker. The N-acetyltransferase stretch occupies residues 251-459 (GVSFVNPEAT…TRLPHHPKNQ (209 aa)). UDP-N-acetyl-alpha-D-glucosamine is bound by residues Arg332 and Lys350. His362 functions as the Proton acceptor in the catalytic mechanism. UDP-N-acetyl-alpha-D-glucosamine-binding residues include Tyr365 and Asn376. Residues Ala379, 385–386 (NY), Ser404, Ala422, and Arg439 each bind acetyl-CoA.

The protein in the N-terminal section; belongs to the N-acetylglucosamine-1-phosphate uridyltransferase family. It in the C-terminal section; belongs to the transferase hexapeptide repeat family. In terms of assembly, homotrimer. Requires Mg(2+) as cofactor.

It localises to the cytoplasm. The enzyme catalyses alpha-D-glucosamine 1-phosphate + acetyl-CoA = N-acetyl-alpha-D-glucosamine 1-phosphate + CoA + H(+). It carries out the reaction N-acetyl-alpha-D-glucosamine 1-phosphate + UTP + H(+) = UDP-N-acetyl-alpha-D-glucosamine + diphosphate. The protein operates within nucleotide-sugar biosynthesis; UDP-N-acetyl-alpha-D-glucosamine biosynthesis; N-acetyl-alpha-D-glucosamine 1-phosphate from alpha-D-glucosamine 6-phosphate (route II): step 2/2. It functions in the pathway nucleotide-sugar biosynthesis; UDP-N-acetyl-alpha-D-glucosamine biosynthesis; UDP-N-acetyl-alpha-D-glucosamine from N-acetyl-alpha-D-glucosamine 1-phosphate: step 1/1. Its pathway is bacterial outer membrane biogenesis; LPS lipid A biosynthesis. Catalyzes the last two sequential reactions in the de novo biosynthetic pathway for UDP-N-acetylglucosamine (UDP-GlcNAc). The C-terminal domain catalyzes the transfer of acetyl group from acetyl coenzyme A to glucosamine-1-phosphate (GlcN-1-P) to produce N-acetylglucosamine-1-phosphate (GlcNAc-1-P), which is converted into UDP-GlcNAc by the transfer of uridine 5-monophosphate (from uridine 5-triphosphate), a reaction catalyzed by the N-terminal domain. The protein is Bifunctional protein GlmU of Streptococcus pneumoniae serotype 19F (strain G54).